The chain runs to 386 residues: Succinate--CoA ligase [ADP-forming] subunit beta (386 aa).

One can recognise an ATP-grasp domain in the interval 9–244 (KELLRQYGVA…LDEEDPKEIE (236 aa)). ATP contacts are provided by residues lysine 46, 53–55 (GRG), glutamate 99, cysteine 102, and glutamate 107. Residues asparagine 199 and aspartate 213 each coordinate Mg(2+). Substrate is bound by residues asparagine 264 and 321 to 323 (GIM).

Belongs to the succinate/malate CoA ligase beta subunit family. As to quaternary structure, heterotetramer of two alpha and two beta subunits. Mg(2+) serves as cofactor.

It catalyses the reaction succinate + ATP + CoA = succinyl-CoA + ADP + phosphate. The enzyme catalyses GTP + succinate + CoA = succinyl-CoA + GDP + phosphate. It participates in carbohydrate metabolism; tricarboxylic acid cycle; succinate from succinyl-CoA (ligase route): step 1/1. Its function is as follows. Succinyl-CoA synthetase functions in the citric acid cycle (TCA), coupling the hydrolysis of succinyl-CoA to the synthesis of either ATP or GTP and thus represents the only step of substrate-level phosphorylation in the TCA. The beta subunit provides nucleotide specificity of the enzyme and binds the substrate succinate, while the binding sites for coenzyme A and phosphate are found in the alpha subunit. The protein is Succinate--CoA ligase [ADP-forming] subunit beta of Halalkalibacterium halodurans (strain ATCC BAA-125 / DSM 18197 / FERM 7344 / JCM 9153 / C-125) (Bacillus halodurans).